We begin with the raw amino-acid sequence, 762 residues long: Lysyl oxidase homolog 2B (762 aa).

A signal peptide spans 1–20 (MLALWSISFVLLCSWRLSYA). SRCR domains are found at residues 53 to 154 (LRLA…VVCS), 183 to 292 (IRPI…VSCI), 316 to 417 (VRLR…VKCN), and 427 to 536 (LRLS…VSCS). Cystine bridges form between Cys79/Cys143, Cys92/Cys153, Cys123/Cys133, Cys213/Cys281, Cys226/Cys291, Cys260/Cys270, Cys341/Cys406, Cys354/Cys416, and Cys385/Cys395. Asn278 is a glycosylation site (N-linked (GlcNAc...) asparagine). Asn447 carries N-linked (GlcNAc...) asparagine glycosylation. Disulfide bonds link Cys456-Cys522, Cys469-Cys535, and Cys503-Cys513. Positions 540–742 (PDLVLNPQVV…WMYNCHIGGS (203 aa)) are lysyl-oxidase like. Ca(2+)-binding residues include Asp541 and Leu542. Intrachain disulfides connect Cys565–Cys616, Cys571–Cys686, Cys648–Cys664, and Cys654–Cys676. Residues His617, His619, and His621 each coordinate Cu cation. An N-linked (GlcNAc...) asparagine glycan is attached at Asn635. Residues 644–680 (KASFCLEDSECDEGIEKRYECANFGEQGITVGCWDTY) constitute a cross-link (lysine tyrosylquinone (Lys-Tyr)). At Tyr680 the chain carries 2',4',5'-topaquinone. Ca(2+) contacts are provided by Glu713, Asp715, Asn718, and Asn719. Cys723 and Cys737 are oxidised to a cystine.

Belongs to the lysyl oxidase family. The cofactor is Cu cation. Lysine tyrosylquinone residue serves as cofactor. The lysine tyrosylquinone cross-link (LTQ) is generated by condensation of the epsilon-amino group of a lysine with a topaquinone produced by oxidation of tyrosine.

It localises to the secreted. It is found in the extracellular space. Its subcellular location is the extracellular matrix. The protein localises to the basement membrane. The protein resides in the nucleus. It localises to the chromosome. It is found in the endoplasmic reticulum. The enzyme catalyses L-lysyl-[protein] + O2 + H2O = (S)-2-amino-6-oxohexanoyl-[protein] + H2O2 + NH4(+). In terms of biological role, mediates the post-translational oxidative deamination of lysine residues on target proteins leading to the formation of deaminated lysine (allysine). Acts as a transcription corepressor and specifically mediates deamination of trimethylated 'Lys-4' of histone H3 (H3K4me3), a specific tag for epigenetic transcriptional activation. Shows no activity against histone H3 when it is trimethylated on 'Lys-9' (H3K9me3) or 'Lys-27' (H3K27me3) or when 'Lys-4' is monomethylated (H3K4me1) or dimethylated (H3K4me2). Also mediates deamination of methylated TAF10, a member of the transcription factor IID (TFIID) complex, which induces release of TAF10 from promoters, leading to inhibition of TFIID-dependent transcription. LOXL2-mediated deamination of TAF10 results in transcriptional repression of genes required for embryonic stem cell pluripotency. Involved in epithelial to mesenchymal transition (EMT) and participates in repression of E-cadherin, probably by mediating deamination of histone H3. When secreted into the extracellular matrix, promotes cross-linking of extracellular matrix proteins by mediating oxidative deamination of peptidyl lysine residues in precursors to fibrous collagen and elastin. Acts as a regulator of sprouting angiogenesis, probably via collagen IV scaffolding. Acts as a regulator of chondrocyte differentiation, probably by regulating expression of factors that control chondrocyte differentiation. Required with loxl2a for correct expression of Sox2 and for neural differentiation. This is Lysyl oxidase homolog 2B (loxl2b) from Danio rerio (Zebrafish).